We begin with the raw amino-acid sequence, 311 residues long: Probable dihydroorotate dehydrogenase A (fumarate) (311 aa).

Substrate is bound by residues Lys45, 69-73, and Asn128; that span reads NSMGL. 45-46 lines the FMN pocket; sequence KT. Position 128 (Asn128) interacts with FMN. The Nucleophile role is filled by Cys131. Lys165 and Val193 together coordinate FMN. Residue 194 to 195 participates in substrate binding; that stretch reads NS. Residues Gly220, 248–249, and 270–271 each bind FMN; these read GG and GT.

The protein belongs to the dihydroorotate dehydrogenase family. Type 1 subfamily. In terms of assembly, homodimer. FMN is required as a cofactor.

The protein resides in the cytoplasm. It catalyses the reaction (S)-dihydroorotate + fumarate = orotate + succinate. Its pathway is pyrimidine metabolism; UMP biosynthesis via de novo pathway. Its function is as follows. Catalyzes the conversion of dihydroorotate to orotate with fumarate as the electron acceptor. The protein is Probable dihydroorotate dehydrogenase A (fumarate) (pyrDA) of Streptococcus pneumoniae serotype 4 (strain ATCC BAA-334 / TIGR4).